We begin with the raw amino-acid sequence, 491 residues long: Diacylglycerol O-acyltransferase 1 (491 aa).

The disordered stretch occupies residues 1 to 60 (MGDRGGAGGTRRRRTGSRPSSHGGGGPAAAEEEVRDAAAGPDMGAAGDAPAPAPSKDADD). Residues 1 to 86 (MGDRGGAGGT…SLFSSDSGFN (86 aa)) are Cytoplasmic-facing. The tract at residues 1-94 (MGDRGGAGGT…FNNYRGILNW (94 aa)) is involved in homomerization. A phosphoserine mark is found at serine 20 and serine 21. The segment covering 37 to 50 (AAAGPDMGAAGDAP) has biased composition (low complexity). Residues 87–121 (NYRGILNWCVVMLILSNARLFLENLIKYGILVDPI) traverse the membrane as a helical segment. Residues 122–133 (QVVSLFLKDPYS) are Lumenal-facing. The extracellular loop 1 (EL1) stretch occupies residues 122–133 (QVVSLFLKDPYS). Residues 134–159 (WPAPCLVIAANVFAVAAFQVEKRLAV) traverse the membrane as a helical segment. The segment at 134-491 (WPAPCLVIAA…LNYEAPVAGA (358 aa)) is MBOAT fold. Residues 160-164 (GALTE) are Cytoplasmic-facing. A helical membrane pass occupies residues 165–187 (QAGLLLHVANLATILCFPAAVVL). The Lumenal segment spans residues 188–194 (LVESITP). The chain crosses the membrane as a helical span at residues 195-226 (VGSLLALMVHTILFLKLFSYRDVNLWCRRARA). Residues 227-276 (KAASAGKRASSAAAPHTVSYPDNLTYRDLYYFLFAPTLCYELNFPRSPRI) lie on the Cytoplasmic side of the membrane. Positions 227-279 (KAASAGKRASSAAAPHTVSYPDNLTYRDLYYFLFAPTLCYELNFPRSPRIRKR) are intracellular loop 1 (IL1). A helical transmembrane segment spans residues 277–311 (RKRFLLRRILEMLFFTQLQVGLIQQWMVPTIQNSM). Over 312-318 (KPFKDMD) the chain is Lumenal. The helical transmembrane segment at 319 to 356 (YSRIIERLLKLAVPNHLIWLIFFYWLFHSCLNAVAELM) threads the bilayer. Topologically, residues 357–402 (QFGDREFYRDWWNSESVTYFWQNWNIPVHKWCIRHFYKPMLRRGSS) are cytoplasmic. Positions 357–402 (QFGDREFYRDWWNSESVTYFWQNWNIPVHKWCIRHFYKPMLRRGSS) are intracellular loop 2 (IL2). An FYXDWWN motif motif is present at residues 363–369 (FYRDWWN). Residues 377 to 385 (WQNWNIPVH), tyrosine 393, and arginine 407 contribute to the an acyl-CoA site. The tract at residues 383-397 (PVHKWCIRHFYKPML) is amphipathic helix (AH). The chain crosses the membrane as a helical span at residues 403–423 (RWMARIGVFLASAFFHEYLVS). Residue histidine 418 is part of the active site. The Lumenal portion of the chain corresponds to 424 to 431 (VPLRMFRL). A helical membrane pass occupies residues 432–450 (WAFTGMMAQIPLAWFVGRF). Residues 451 to 452 (FQ) are Cytoplasmic-facing. Residues 453-484 (GNYGNAAVWLTLIIGQPIAVLMYVHDYYVLNY) form a helical membrane-spanning segment. Tyrosine 480 provides a ligand contact to an acyl-CoA. Over 485-491 (EAPVAGA) the chain is Lumenal.

It belongs to the membrane-bound acyltransferase family. Sterol o-acyltransferase subfamily. As to quaternary structure, homodimer or homotetramer; both forms have similar enzymatic activities.

The protein resides in the endoplasmic reticulum membrane. The catalysed reaction is an acyl-CoA + a 1,2-diacyl-sn-glycerol = a triacyl-sn-glycerol + CoA. It catalyses the reaction all-trans-retinol + an acyl-CoA = an all-trans-retinyl ester + CoA. It carries out the reaction 2-(9Z-octadecenoyl)-glycerol + (9Z)-octadecenoyl-CoA = 1,2-di-(9Z-octadecenoyl)-sn-glycerol + CoA. The enzyme catalyses 1,2-di-(9Z-octadecenoyl)-sn-glycerol + (9Z)-octadecenoyl-CoA = 1,2,3-tri-(9Z-octadecenoyl)-glycerol + CoA. The catalysed reaction is all-trans-retinol + hexadecanoyl-CoA = all-trans-retinyl hexadecanoate + CoA. It catalyses the reaction 1-O-(9Z-octadecenyl)-glycerol + (9Z)-octadecenoyl-CoA = 1-O-(9Z-octadecyl)-3-(9Z-octadecenoyl)-glycerol + CoA. It carries out the reaction 1-O-(9Z-octadecyl)-3-(9Z-octadecenoyl)-glycerol + (9Z)-octadecenoyl-CoA = 1-O-(9Z-octadecenyl)-2,3-di-(9Z-octadecenoyl)glycerol + CoA. The enzyme catalyses 1-(9Z-octadecenoyl)-glycerol + (9Z)-octadecenoyl-CoA = 1,2-di-(9Z-octadecenoyl)-glycerol + CoA. The catalysed reaction is 1,2-di-(9Z-octadecenoyl)-glycerol + (9Z)-octadecenoate + H(+) = 1,2,3-tri-(9Z-octadecenoyl)-glycerol + H2O. It catalyses the reaction 1-octadecanoyl-2-(5Z,8Z,11Z,14Z-eicosatetraenoyl)-sn-glycerol + (9Z)-octadecenoyl-CoA = 1-octadecanoyl-2-(5Z,8Z,11Z,14Z)-eicosatetraenoyl-3-(9Z)-octadecenoyl-sn-glycerol + CoA. It carries out the reaction hexadecane-1,2-diol + 2 hexadecanoyl-CoA = 1,2-O,O-dihexadecanoyl-1,2-hexadecanediol + 2 CoA. The enzyme catalyses hexadecane-1,2-diol + hexadecanoyl-CoA = 2-hydroxyhexadecyl hexadecanoate + CoA. The catalysed reaction is 2-(9Z-octadecenoyl)-glycerol + hexadecanoyl-CoA = 1-hexadecanoyl-2-(9Z-octadecenoyl)-sn-glycerol + CoA. It catalyses the reaction 1,2-di-(9Z-octadecenoyl)-sn-glycerol + hexadecanoyl-CoA = 1,2-di-(9Z)-octadecenoyl-3-hexadecanoyl-sn-glycerol + CoA. It carries out the reaction hexadecan-1-ol + hexadecanoyl-CoA = hexadecanyl hexadecanoate + CoA. The enzyme catalyses 13-cis-retinol + hexadecanoyl-CoA = 13-cis-retinyl hexadecanoate + CoA. The catalysed reaction is 1,3-di-(9Z-octadecenoyl)-glycerol + (9Z)-octadecenoyl-CoA = 1,2,3-tri-(9Z-octadecenoyl)-glycerol + CoA. It catalyses the reaction 2,3-di-(9Z)-octadecenoyl-sn-glycerol + (9Z)-octadecenoyl-CoA = 1,2,3-tri-(9Z-octadecenoyl)-glycerol + CoA. The protein operates within lipid metabolism; glycerolipid metabolism. Its function is as follows. Catalyzes the terminal and only committed step in triacylglycerol synthesis by using diacylglycerol and fatty acyl CoA as substrates. Highly expressed in epithelial cells of the small intestine and its activity is essential for the absorption of dietary fats. In liver, plays a role in esterifying exogenous fatty acids to glycerol, and is required to synthesize fat for storage. Also present in female mammary glands, where it produces fat in the milk. May be involved in VLDL (very low density lipoprotein) assembly. In contrast to DGAT2 it is not essential for survival. Functions as the major acyl-CoA retinol acyltransferase (ARAT) in the skin, where it acts to maintain retinoid homeostasis and prevent retinoid toxicity leading to skin and hair disorders. Exhibits additional acyltransferase activities, includin acyl CoA:monoacylglycerol acyltransferase (MGAT), wax monoester and wax diester synthases. Also able to use 1-monoalkylglycerol (1-MAkG) as an acyl acceptor for the synthesis of monoalkyl-monoacylglycerol (MAMAG). The chain is Diacylglycerol O-acyltransferase 1 (DGAT1) from Chlorocebus aethiops (Green monkey).